The chain runs to 416 residues: Gamma-glutamyl phosphate reductase (416 aa).

It belongs to the gamma-glutamyl phosphate reductase family.

The protein localises to the cytoplasm. The catalysed reaction is L-glutamate 5-semialdehyde + phosphate + NADP(+) = L-glutamyl 5-phosphate + NADPH + H(+). Its pathway is amino-acid biosynthesis; L-proline biosynthesis; L-glutamate 5-semialdehyde from L-glutamate: step 2/2. In terms of biological role, catalyzes the NADPH-dependent reduction of L-glutamate 5-phosphate into L-glutamate 5-semialdehyde and phosphate. The product spontaneously undergoes cyclization to form 1-pyrroline-5-carboxylate. The polypeptide is Gamma-glutamyl phosphate reductase (Streptococcus equi subsp. zooepidemicus (strain MGCS10565)).